An 837-amino-acid chain; its full sequence is Striatin-interacting protein 1 (837 aa).

N-acetylmethionine is present on Met1. Disordered regions lie at residues 1–67 (MEPA…ESPD) and 333–423 (AASP…KGLP). Pro residues predominate over residues 18–35 (PQPPPPPPPAAAQPPPGA). The segment covering 36-46 (PRAAAGLLPGG) has biased composition (low complexity). Residues 47-60 (KAREFNRNQRKDSE) show a composition bias toward basic and acidic residues. Phosphoserine is present on residues Ser59, Ser335, and Ser339. Over residues 356–377 (KALIKQDNLDAFNERDPYKADD) the composition is skewed to basic and acidic residues. Acidic residues predominate over residues 378-391 (SREEEEENDDDNSL). Phosphoserine is present on Ser788. Residues 796–837 (DNCLQSVLGQRVDLPEDFQMNYDLWLEREVFSKPISWEELLQ) are required for STRIPAK core complex formation.

It belongs to the STRIP family. Part of the core of STRIPAK complexes composed of PP2A catalytic and scaffolding subunits, the striatins (PP2A regulatory subunits), the striatin-associated proteins MOB4, STRIP1 and STRIP2, PDCD10 and members of the STE20 kinases, such as STK24 and STK26. The STRIPAK complex can be extended by adapter proteins such as SLMAP:SIKE1, CTTNBP2 or CTTNBP2NL. Interacts with CDC42BPB. Interacts with CTTNBP2NL.

It localises to the cytoplasm. In terms of biological role, plays a role in the regulation of cell morphology and cytoskeletal organization. Required in the cortical actin filament dynamics and cell shape. Part of the striatin-interacting phosphatase and kinase (STRIPAK) complexes. STRIPAK complexes have critical roles in protein (de)phosphorylation and are regulators of multiple signaling pathways including Hippo, MAPK, nuclear receptor and cytoskeleton remodeling. Different types of STRIPAK complexes are involved in a variety of biological processes such as cell growth, differentiation, apoptosis, metabolism and immune regulation. In Homo sapiens (Human), this protein is Striatin-interacting protein 1.